We begin with the raw amino-acid sequence, 609 residues long: CTTNBP2 N-terminal-like protein (609 aa).

Polar residues predominate over residues 1–10 (MEQNSNSSVA). Residues 1 to 29 (MEQNSNSSVADTFAEAPATDADYGTENCS) are disordered. Coiled coils occupy residues 182–264 (RMVN…QKQI) and 303–370 (IAEG…QQLG). The interval 556–584 (PPAGARGAPPPIPTKPIVPPKREPSLSRL) is disordered. The segment covering 563-574 (APPPIPTKPIVP) has biased composition (pro residues). Residue S586 is modified to Phosphoserine.

It is found in the cell projection. Its subcellular location is the lamellipodium. The protein resides in the cytoplasm. It localises to the cytoskeleton. The protein localises to the stress fiber. Its function is as follows. Regulates lamellipodial actin dynamics in a Cortactin-dependent manner and is therefore likely involved in controlling actin branch density, actin-retrograde flow rates and lamellipodial protrusion. Functions by slowing the dissociation of Cortactin from Arp2/3 nucleated branches thereby increasing branch nucleation and junction stability. Associates with core striatin-interacting phosphatase and kinase (STRIPAK) complex to form CTTNBP2NL-STRIPAK complexes. STRIPAK complexes have critical roles in protein (de)phosphorylation and are regulators of multiple signaling pathways including Hippo, MAPK, nuclear receptor and cytoskeleton remodeling. Different types of STRIPAK complexes are involved in a variety of biological processes such as cell growth, differentiation, apoptosis, metabolism and immune regulation. This Drosophila melanogaster (Fruit fly) protein is CTTNBP2 N-terminal-like protein.